A 206-amino-acid polypeptide reads, in one-letter code: ATP-dependent Clp protease proteolytic subunit (206 aa).

Catalysis depends on Ser110, which acts as the Nucleophile. His135 is a catalytic residue.

Belongs to the peptidase S14 family. In terms of assembly, fourteen ClpP subunits assemble into 2 heptameric rings which stack back to back to give a disk-like structure with a central cavity, resembling the structure of eukaryotic proteasomes.

It localises to the cytoplasm. The enzyme catalyses Hydrolysis of proteins to small peptides in the presence of ATP and magnesium. alpha-casein is the usual test substrate. In the absence of ATP, only oligopeptides shorter than five residues are hydrolyzed (such as succinyl-Leu-Tyr-|-NHMec, and Leu-Tyr-Leu-|-Tyr-Trp, in which cleavage of the -Tyr-|-Leu- and -Tyr-|-Trp bonds also occurs).. Cleaves peptides in various proteins in a process that requires ATP hydrolysis. Has a chymotrypsin-like activity. Plays a major role in the degradation of misfolded proteins. The chain is ATP-dependent Clp protease proteolytic subunit from Edwardsiella ictaluri (strain 93-146).